A 1267-amino-acid chain; its full sequence is Clustered mitochondria protein homolog (1267 aa).

TPR repeat units follow at residues 64-102 (YNLK…KPYN), 420-453 (YSFV…LNML), 716-749 (EAHE…MIKE), 795-830 (LVPL…IPAL), 904-939 (RSIC…KSRA), 1010-1043 (AEKY…YERV), and 1138-1171 (AYIK…FTKE). Residues 329-586 (PTNGPDYLRT…NTYPLDVEFA (258 aa)) form the Clu domain. Residues 1203-1219 (QQDQTAASGLKQQPQKS) are compositionally biased toward polar residues. A disordered region spans residues 1203 to 1267 (QQDQTAASGL…KSKSKGKNKK (65 aa)). Over residues 1224 to 1239 (NKKETTNPDLADKSVD) the composition is skewed to basic and acidic residues. Residues 1254–1267 (KTTKKSKSKGKNKK) are compositionally biased toward basic residues.

This sequence belongs to the CLU family. In terms of assembly, may associate with the eukaryotic translation initiation factor 3 (eIF-3) complex.

Its subcellular location is the cytoplasm. MRNA-binding protein involved in proper cytoplasmic distribution of mitochondria. This is Clustered mitochondria protein homolog from Candida glabrata (strain ATCC 2001 / BCRC 20586 / JCM 3761 / NBRC 0622 / NRRL Y-65 / CBS 138) (Yeast).